Consider the following 150-residue polypeptide: Large ribosomal subunit protein uL15 (150 aa).

The interval 1–57 (MTLRLESLKPNKGARRRKLRKGRGIAAGQGASCGFGMRGQKSRSGRPTRPGFEGGQM) is disordered. Residues 12 to 23 (KGARRRKLRKGR) are compositionally biased toward basic residues. The segment covering 25–37 (IAAGQGASCGFGM) has biased composition (gly residues).

Belongs to the universal ribosomal protein uL15 family. Part of the 50S ribosomal subunit.

Its function is as follows. Binds to the 23S rRNA. This chain is Large ribosomal subunit protein uL15, found in Synechococcus sp. (strain CC9311).